The chain runs to 334 residues: Dihydroorotate dehydrogenase (quinone) (334 aa).

Residues Ala-61–Lys-65 and Thr-85 each bind FMN. Lys-65 is a binding site for substrate. Residue Asn-110 to Phe-114 coordinates substrate. Residues Asn-138 and Asn-171 each coordinate FMN. Position 171 (Asn-171) interacts with substrate. Ser-174 serves as the catalytic Nucleophile. Asn-176 provides a ligand contact to substrate. 2 residues coordinate FMN: Lys-216 and Thr-244. Asn-245–Thr-246 contacts substrate. FMN is bound by residues Gly-266, Gly-295, and Tyr-316–Thr-317.

This sequence belongs to the dihydroorotate dehydrogenase family. Type 2 subfamily. As to quaternary structure, monomer. FMN serves as cofactor.

The protein resides in the cell membrane. It carries out the reaction (S)-dihydroorotate + a quinone = orotate + a quinol. It functions in the pathway pyrimidine metabolism; UMP biosynthesis via de novo pathway; orotate from (S)-dihydroorotate (quinone route): step 1/1. Functionally, catalyzes the conversion of dihydroorotate to orotate with quinone as electron acceptor. In Idiomarina loihiensis (strain ATCC BAA-735 / DSM 15497 / L2-TR), this protein is Dihydroorotate dehydrogenase (quinone).